The sequence spans 621 residues: MDISMYLGCSLGAALGGVIFASYKLGLLYQLFHKTERQSPRHGGESVAEVLRSHGVKFVFTLVGGHISPILVACEKLGIRIVDTRHEATAVFAADAVARLSGTVGVAAVTAGPGLTNTVTAVKNAQMAESPLLLIGGAAATLLQGRGALQDIDQMSLFKPLCKFCASVRTVREIVPTVRKALAIAQSGTPGPVFIEFPIDTLYPYHVVEKEFAPKNTPKGLMGKIIAWYLKNHLSNLFAGAWESRDLSPLPVHIPHATDDQVQRCVELVSRAKKPVILLGSQATLPPTPADDIRKALESLGIPCFLGGMSRGLLGKNSPLHIRQNRRDALKDADLVLLAGTVCDFRLSYGRVLNRRSKIIAVNRDKSQLLKNSDMFWKPTVAIQGDAGSFLLNLSKALKGHRCPEEWPQSLKEGDNVKEKANRAKADEKTERHLNPLSVLHRVDELLAEDSIIVADGGDFVGSAAYIMRPRGPLCWLDPGAFGTLGVGGGFALGAKLCRPESEVWIVYGDGSLGYTVAEFDTFTRHKTPVIALVGNDACWSQISREQVPMLGSNVACGLAFTDYHVVADGYGGKGYLIGREDESQLEDIIKKAQKECKEGKAVLLNVLIGKTNFREGSISV.

Residues L7 to Y29 traverse the membrane as a helical segment. Position 87 (E87) interacts with thiamine diphosphate. The thiamine pyrophosphate binding stretch occupies residues D459 to C539. 2 residues coordinate Mg(2+): D510 and N536.

It belongs to the TPP enzyme family. It depends on Mg(2+) as a cofactor. The cofactor is thiamine diphosphate.

It localises to the endoplasmic reticulum membrane. It carries out the reaction 2-hydroxyoctadecanoyl-CoA = heptadecanal + formyl-CoA. The catalysed reaction is (2R)-hydroxyhexadecanoyl-CoA = pentadecanal + formyl-CoA. In terms of biological role, endoplasmic reticulum 2-OH acyl-CoA lyase involved in the cleavage (C1 removal) reaction in the fatty acid alpha-oxydation in a thiamine pyrophosphate (TPP)-dependent manner. The sequence is that of 2-hydroxyacyl-CoA lyase 2 (ilvbl) from Danio rerio (Zebrafish).